The primary structure comprises 293 residues: Cell wall protein PGA31 (293 aa).

The first 18 residues, 1 to 18 (MKFLTAASLLTLSSSALA), serve as a signal peptide directing secretion. N-linked (GlcNAc...) asparagine glycosylation occurs at asparagine 131. The interval 161 to 187 (ESASSSSSSAAPEPTASSSEAPKETPV) is disordered. The segment covering 163–180 (ASSSSSSAAPEPTASSSE) has biased composition (low complexity). N-linked (GlcNAc...) asparagine glycosylation is present at asparagine 190. The tract at residues 233–262 (VPSKTASSEAAPPKTTVDSVSKPAPSGKKP) is disordered. A lipid anchor (GPI-anchor amidated glycine) is attached at glycine 271. Positions 272 to 293 (AANALTGGSVAIAVAAAIGLVF) are cleaved as a propeptide — removed in mature form.

This sequence belongs to the SRP1/TIP1 family. The GPI-anchor is attached to the protein in the endoplasmic reticulum and serves to target the protein to the cell surface. There, the glucosamine-inositol phospholipid moiety is cleaved off and the GPI-modified mannoprotein is covalently attached via its lipidless GPI glycan remnant to the 1,6-beta-glucan of the outer cell wall layer.

It is found in the secreted. It localises to the cell wall. The protein resides in the membrane. Its function is as follows. Component of the cell wall involved in virulence which plays a role in the relationship between C.albicans and the host. Involved in the regulation or assembly of chitin within the cell wall. The sequence is that of Cell wall protein PGA31 (PGA31) from Candida albicans (strain SC5314 / ATCC MYA-2876) (Yeast).